A 1342-amino-acid polypeptide reads, in one-letter code: DNA-directed RNA polymerase subunit beta (1342 aa).

Belongs to the RNA polymerase beta chain family. The RNAP catalytic core consists of 2 alpha, 1 beta, 1 beta' and 1 omega subunit. When a sigma factor is associated with the core the holoenzyme is formed, which can initiate transcription.

It catalyses the reaction RNA(n) + a ribonucleoside 5'-triphosphate = RNA(n+1) + diphosphate. DNA-dependent RNA polymerase catalyzes the transcription of DNA into RNA using the four ribonucleoside triphosphates as substrates. This chain is DNA-directed RNA polymerase subunit beta, found in Colwellia psychrerythraea (strain 34H / ATCC BAA-681) (Vibrio psychroerythus).